The sequence spans 113 residues: Protein FMC1 homolog (113 aa).

The tract at residues 94-113 (SAGLVGLKLPHQPGGKGWEP) is disordered.

The protein belongs to the FMC1 family. Interacts with ATPAF2.

The protein resides in the mitochondrion. In terms of biological role, plays a role in the assembly/stability of the mitochondrial membrane ATP synthase (F(1)F(0) ATP synthase or Complex V). This chain is Protein FMC1 homolog, found in Homo sapiens (Human).